Consider the following 501-residue polypeptide: Dipeptide and tripeptide permease A (501 aa).

Over 1-34 (MSTANNKPTESVSLNAFKQPKSFYLIFSIELWER) the chain is Cytoplasmic. Residues 35–55 (FGYYGLQGIMAVYLVKQLGMS) traverse the membrane as a helical segment. Residues 56-59 (EADS) are Periplasmic-facing. A helical transmembrane segment spans residues 60–80 (ITLFSSFSALVYGLVAIGGWL). Residues 81–89 (GDKVLGTKR) lie on the Cytoplasmic side of the membrane. The helical transmembrane segment at 90-110 (VIMLGAIVLAIGYGLVAWSGH) threads the bilayer. A topological domain (periplasmic) is located at residue Asp111. The chain crosses the membrane as a helical span at residues 112–132 (VAIVYMGMATIAVGNGLFKAN). Over 133 to 153 (PSSLLSTCYAKDDPRLDGAFT) the chain is Cytoplasmic. Residues 154-174 (MYYMSINIGSFFSMLATPWLA) form a helical membrane-spanning segment. Over 175–178 (AKFG) the chain is Periplasmic. A helical transmembrane segment spans residues 179-199 (WSVAFALSFVGMLITVVNFLF). At 200–217 (CRSWVKDYGSKPDFEAVH) the chain is on the cytoplasmic side. A helical membrane pass occupies residues 218–238 (FGKLLATIAGVIVLIAIATWL). Residues 239–246 (LHNQGIAR) are Periplasmic-facing. Residues 247–267 (MVLGVIALGIVIIFGKEAFAM) form a helical membrane-spanning segment. The Cytoplasmic portion of the chain corresponds to 268 to 274 (QGAARRK). A helical membrane pass occupies residues 275–295 (MIVAFILMLEAIIFFVLYSQM). Topologically, residues 296 to 320 (PTSLNFFAIRNVEHTILGIAVEPEQ) are periplasmic. A helical transmembrane segment spans residues 321 to 341 (YQALNPFWIIIGSPILAAIYN). Topologically, residues 342 to 352 (KMGDTLPMPTK) are cytoplasmic. The helical transmembrane segment at 353-373 (FAIGMVLCSGAFLVLPLGAKF) threads the bilayer. The Periplasmic portion of the chain corresponds to 374–383 (ATDAGIVSVN). A helical transmembrane segment spans residues 384–404 (WLILSYGLQSIGELMISGLGL). Residues 405–414 (AMVAQLVPQR) lie on the Cytoplasmic side of the membrane. The helical transmembrane segment at 415–435 (LMGFIMGSWFLTTAGANLIGG) threads the bilayer. At 436 to 459 (YVAGMMAVPENVTDPLMSLEVYGR) the chain is on the periplasmic side. Residues 460–480 (VFLQIGVATAVIAALMLITAP) traverse the membrane as a helical segment. At 481–501 (KLNRMTQDDEENAKAAKTATA) the chain is on the cytoplasmic side.

It belongs to the major facilitator superfamily. Proton-dependent oligopeptide transporter (POT/PTR) (TC 2.A.17) family. DtpA subfamily.

Its subcellular location is the cell inner membrane. In terms of biological role, proton-dependent permease that transports di- and tripeptides. The sequence is that of Dipeptide and tripeptide permease A from Citrobacter koseri (strain ATCC BAA-895 / CDC 4225-83 / SGSC4696).